The sequence spans 304 residues: Lipid droplet-associated triacylglycerol lipase (304 aa).

Over 1 to 155 (MTVKEYTKSK…MGIKMTAALR (155 aa)) the chain is Lumenal. An N-linked (GlcNAc...) asparagine glycan is attached at N95. Positions 107-111 (GHSVG) match the GXSXG motif. S109 acts as the Nucleophile in catalysis. Residues 156–176 (YIPPLAHVVSLFSYIFFYWIL) lie within the membrane without spanning it. The Lumenal portion of the chain corresponds to 177–304 (SEGFSRFIID…HAEYAINAFF (128 aa)).

This sequence belongs to the AB hydrolase superfamily. LDAH family.

It localises to the lipid droplet. It is found in the membrane. It carries out the reaction a triacylglycerol + H2O = a diacylglycerol + a fatty acid + H(+). In terms of biological role, shows both triacylglycerol (TAG) lipase and ester hydrolase activities. May play a role in TAG homeostasis. In Saccharomyces cerevisiae (strain ATCC 204508 / S288c) (Baker's yeast), this protein is Lipid droplet-associated triacylglycerol lipase.